The primary structure comprises 599 residues: Potassium-transporting ATPase potassium-binding subunit (599 aa).

Transmembrane regions (helical) follow at residues 8–28 (LLAL…IWLA), 61–81 (WQYA…VYAL), 133–153 (ALAV…FALF), 176–196 (AWLL…NGVI), 280–300 (LTNF…CFAF), 311–331 (WAVL…ITPA), 366–386 (INAS…AVIA), 391–411 (FTPL…VVFG), 416–436 (GLYG…LMIG), 456–476 (IAIL…VLAG), 521–541 (LLGL…LAIA), and 563–583 (LFVL…YVPA).

Belongs to the KdpA family. As to quaternary structure, the system is composed of three essential subunits: KdpA, KdpB and KdpC.

The protein localises to the cell inner membrane. In terms of biological role, part of the high-affinity ATP-driven potassium transport (or Kdp) system, which catalyzes the hydrolysis of ATP coupled with the electrogenic transport of potassium into the cytoplasm. This subunit binds the periplasmic potassium ions and delivers the ions to the membrane domain of KdpB through an intramembrane tunnel. The sequence is that of Potassium-transporting ATPase potassium-binding subunit from Polaromonas naphthalenivorans (strain CJ2).